The following is an 81-amino-acid chain: Acyl carrier protein (81 aa).

In terms of domain architecture, Carrier spans 4–79; the sequence is QEIFEKVQTI…QAVDFISQKV (76 aa). Ser39 carries the O-(pantetheine 4'-phosphoryl)serine modification.

The protein belongs to the acyl carrier protein (ACP) family. 4'-phosphopantetheine is transferred from CoA to a specific serine of apo-ACP by AcpS. This modification is essential for activity because fatty acids are bound in thioester linkage to the sulfhydryl of the prosthetic group.

It is found in the plastid. It localises to the chloroplast. It functions in the pathway lipid metabolism; fatty acid biosynthesis. In terms of biological role, carrier of the growing fatty acid chain in fatty acid biosynthesis. In Guillardia theta (Cryptophyte), this protein is Acyl carrier protein.